Reading from the N-terminus, the 211-residue chain is Large ribosomal subunit protein uL3 (211 aa).

Q150 carries the N5-methylglutamine modification.

This sequence belongs to the universal ribosomal protein uL3 family. In terms of assembly, part of the 50S ribosomal subunit. Forms a cluster with proteins L14 and L19. In terms of processing, methylated by PrmB.

Functionally, one of the primary rRNA binding proteins, it binds directly near the 3'-end of the 23S rRNA, where it nucleates assembly of the 50S subunit. The protein is Large ribosomal subunit protein uL3 of Pseudomonas syringae pv. tomato (strain ATCC BAA-871 / DC3000).